Consider the following 232-residue polypeptide: Ribose-5-phosphate isomerase A (232 aa).

Substrate contacts are provided by residues 28 to 31, 83 to 86, and 96 to 99; these read TGST, DGAD, and KGGG. Glu-105 functions as the Proton acceptor in the catalytic mechanism. Lys-123 serves as a coordination point for substrate.

The protein belongs to the ribose 5-phosphate isomerase family. Homodimer.

It catalyses the reaction aldehydo-D-ribose 5-phosphate = D-ribulose 5-phosphate. The protein operates within carbohydrate degradation; pentose phosphate pathway; D-ribose 5-phosphate from D-ribulose 5-phosphate (non-oxidative stage): step 1/1. Its function is as follows. Catalyzes the reversible conversion of ribose-5-phosphate to ribulose 5-phosphate. The sequence is that of Ribose-5-phosphate isomerase A from Rhizobium leguminosarum bv. trifolii (strain WSM2304).